The primary structure comprises 180 residues: Endogenous alpha-amylase/subtilisin inhibitor (180 aa).

Cystine bridges form between C42–C89 and C143–C147.

The protein belongs to the protease inhibitor I3 (leguminous Kunitz-type inhibitor) family.

In terms of biological role, inhibitor of endogenous alpha-amylase (wheat also produces an exogenous inhibitor which inactivates alpha-amylase from animal and insect origin). This inhibitor can also inhibit subtilisin. The protein is Endogenous alpha-amylase/subtilisin inhibitor of Triticum aestivum (Wheat).